The following is a 1080-amino-acid chain: DNA polymerase II large subunit (1080 aa).

The protein belongs to the archaeal DNA polymerase II family. Heterodimer of a large subunit and a small subunit.

The catalysed reaction is DNA(n) + a 2'-deoxyribonucleoside 5'-triphosphate = DNA(n+1) + diphosphate. The enzyme catalyses Exonucleolytic cleavage in the 3'- to 5'-direction to yield nucleoside 5'-phosphates.. Its function is as follows. Possesses two activities: a DNA synthesis (polymerase) and an exonucleolytic activity that degrades single-stranded DNA in the 3'- to 5'-direction. Has a template-primer preference which is characteristic of a replicative DNA polymerase. The sequence is that of DNA polymerase II large subunit from Picrophilus torridus (strain ATCC 700027 / DSM 9790 / JCM 10055 / NBRC 100828 / KAW 2/3).